The following is a 204-amino-acid chain: Photosystem I reaction center subunit II-2, chloroplastic (204 aa).

The transit peptide at Met-1–Ala-44 directs the protein to the chloroplast. The residue at position 47 (Thr-47) is a Phosphothreonine. The tract at residues Thr-47 to Asn-71 is disordered. A ferredoxin and ferredoxin-oxidoreductase binding region spans residues Arg-137–Thr-145.

Belongs to the PsaD family. Interacts with CURT1C.

It is found in the plastid. It localises to the chloroplast thylakoid membrane. In terms of biological role, PSAD can form complexes with ferredoxin and ferredoxin-oxidoreductase in photosystem I (PS I) reaction center. PSAD may encode the ferredoxin-docking protein. In Arabidopsis thaliana (Mouse-ear cress), this protein is Photosystem I reaction center subunit II-2, chloroplastic (PSAD2).